The chain runs to 519 residues: Cytochrome P450 4A22 (519 aa).

Residues 1–4 (MSVS) constitute a propeptide that is removed on maturation. E321 contacts heme. S440 is subject to Phosphoserine. Position 457 (C457) interacts with heme.

The protein belongs to the cytochrome P450 family.

Its subcellular location is the endoplasmic reticulum membrane. The protein localises to the microsome membrane. It catalyses the reaction an omega-methyl-long-chain fatty acid + reduced [NADPH--hemoprotein reductase] + O2 = an omega-hydroxy-long-chain fatty acid + oxidized [NADPH--hemoprotein reductase] + H2O + H(+). Its function is as follows. Catalyzes the omega- and (omega-1)-hydroxylation of various fatty acids such as laurate and palmitate. Shows no activity towards arachidonic acid and prostaglandin A1. Lacks functional activity in the kidney and does not contribute to renal 20-hydroxyeicosatetraenoic acid (20-HETE) biosynthesis. The polypeptide is Cytochrome P450 4A22 (CYP4A22) (Homo sapiens (Human)).